Reading from the N-terminus, the 590-residue chain is Oleate hydratase (590 aa).

4 residues coordinate FAD: A33, E56, S64, and E82. Residue E82 is the Proton acceptor of the active site. Y200 serves as the catalytic Proton donor. Residues V249, S291, T508, and S512 each contribute to the FAD site.

Belongs to the oleate hydratase family. In terms of assembly, monomer and homodimer. Both forms seem to be active. The cofactor is FAD.

It carries out the reaction (R)-10-hydroxyoctadecanoate = (9Z)-octadecenoate + H2O. It catalyses the reaction (9Z)-octadecenoate + H2O = 10-hydroxyoctadecanoate. The enzyme catalyses (9Z)-hexadecenoate + H2O = 10-hydroxyhexadecanoate. The catalysed reaction is (9Z,12Z)-octadecadienoate + H2O = (12Z)-10-hydroxyoctadecenoate. It carries out the reaction (12Z)-10-hydroxyoctadecenoate + H2O = 10,13-dihydroxyoctadecanoate. It catalyses the reaction (9Z,12Z,15Z)-octadecatrienoate + H2O = (12Z,15Z)-10-hydroxyoctadecadienoate. It participates in lipid metabolism; fatty acid metabolism. Catalyzes the hydration of oleate at its cis-9-double bond to yield 10-hydroxyoctadecanoate, probably in the (R) configuration, and of linoleate at its cis-9- and cis-12-double bond to yield 10-hydroxy-12-octadecenoate and 10,13-dihydroxyoctadecanoate. Is not active on trans-double bonds and esterified fatty acids as substrate; is only active on cis-9- and/or cis-12-double bond of C16 and C18 fatty acids without any trans-configurations, producing 10-hydroxy and 10,13-dihydroxy derivatives. Appears to play a role in oleic acid detoxification and bacterial virulence. This is Oleate hydratase (sph) from Streptococcus pyogenes serotype M49 (strain NZ131).